We begin with the raw amino-acid sequence, 529 residues long: MQQRRPVRRALLSVSDKAGIVEFAQALSARGVELLSTGGTARLLAEKGLPVTEVSDYTGFPEMMDGRVKTLHPKVHGGILGRRGQDDAIMEEHLIQPIDMVVVNLYPFAQTVAREGCSLEDAVENIDIGGPTMVRSAAKNHKDVAIVVKSSDYDAIIKEMDDNEGSLTLATRFDLAIKAFEHTAAYDSMIANYFGSMVPAYHGESKEADGRFPRTLNLNFIKKQDMRYGENSHQQAAFYIEENVKEASVATATQVQGKALSYNNIADTDAALECVKEFAEPACVIVKHANPCGVAIGNSILDAYDRAYKTDPTSAFGGIIAFNRELDAETAQAIISRQFVEVIIAPSASEEALKITAAKQNVRVLTCGQWGERVPGLDFKRVNGGLLVQDRDLGMVGAEELRVVTQRQPTEQELRDALFCWKVAKFVKSNAIVYAKNNMTIGIGAGQMSRVYSAKIAGIKAADEGLEVKGSSMASDAFFPFRDGIDAAAAAGVTCVIQPGGSIRDDEVIAAADEHGIAMLFTDMRHFRH.

The MGS-like domain maps to 1-148; that stretch reads MQQRRPVRRA…KNHKDVAIVV (148 aa). Residue Lys-287 is modified to N6-acetyllysine.

The protein belongs to the PurH family.

The catalysed reaction is (6R)-10-formyltetrahydrofolate + 5-amino-1-(5-phospho-beta-D-ribosyl)imidazole-4-carboxamide = 5-formamido-1-(5-phospho-D-ribosyl)imidazole-4-carboxamide + (6S)-5,6,7,8-tetrahydrofolate. It catalyses the reaction IMP + H2O = 5-formamido-1-(5-phospho-D-ribosyl)imidazole-4-carboxamide. Its pathway is purine metabolism; IMP biosynthesis via de novo pathway; 5-formamido-1-(5-phospho-D-ribosyl)imidazole-4-carboxamide from 5-amino-1-(5-phospho-D-ribosyl)imidazole-4-carboxamide (10-formyl THF route): step 1/1. It participates in purine metabolism; IMP biosynthesis via de novo pathway; IMP from 5-formamido-1-(5-phospho-D-ribosyl)imidazole-4-carboxamide: step 1/1. This is Bifunctional purine biosynthesis protein PurH from Shigella dysenteriae serotype 1 (strain Sd197).